Here is a 380-residue protein sequence, read N- to C-terminus: Glucose-1-phosphate adenylyltransferase (380 aa).

Alpha-D-glucose 1-phosphate-binding positions include glycine 164, glutamate 179–lysine 180, and serine 190.

The protein belongs to the bacterial/plant glucose-1-phosphate adenylyltransferase family. Homotetramer.

It catalyses the reaction alpha-D-glucose 1-phosphate + ATP + H(+) = ADP-alpha-D-glucose + diphosphate. The protein operates within glycan biosynthesis; glycogen biosynthesis. Involved in the biosynthesis of ADP-glucose, a building block required for the elongation reactions to produce glycogen. Catalyzes the reaction between ATP and alpha-D-glucose 1-phosphate (G1P) to produce pyrophosphate and ADP-Glc. This Lactococcus lactis subsp. cremoris (strain SK11) protein is Glucose-1-phosphate adenylyltransferase.